A 31-amino-acid polypeptide reads, in one-letter code: Cytochrome b6-f complex subunit 6 (31 aa).

The chain crosses the membrane as a helical span at residues 4–26 (ITSYFGFLLAASTITSALLIGLS).

Belongs to the PetL family. As to quaternary structure, the 4 large subunits of the cytochrome b6-f complex are cytochrome b6, subunit IV (17 kDa polypeptide, PetD), cytochrome f and the Rieske protein, while the 4 small subunits are PetG, PetL, PetM and PetN. The complex functions as a dimer.

Its subcellular location is the plastid. It localises to the chloroplast thylakoid membrane. Functionally, component of the cytochrome b6-f complex, which mediates electron transfer between photosystem II (PSII) and photosystem I (PSI), cyclic electron flow around PSI, and state transitions. PetL is important for photoautotrophic growth as well as for electron transfer efficiency and stability of the cytochrome b6-f complex. The polypeptide is Cytochrome b6-f complex subunit 6 (Chloranthus spicatus (Chulantree)).